Reading from the N-terminus, the 207-residue chain is Large ribosomal subunit protein uL4 (207 aa).

The disordered stretch occupies residues 44–78 (MRQGTHKTKNRAEVSGGGRKPWRQKGTGRARQGSI).

Belongs to the universal ribosomal protein uL4 family. In terms of assembly, part of the 50S ribosomal subunit.

Functionally, one of the primary rRNA binding proteins, this protein initially binds near the 5'-end of the 23S rRNA. It is important during the early stages of 50S assembly. It makes multiple contacts with different domains of the 23S rRNA in the assembled 50S subunit and ribosome. Forms part of the polypeptide exit tunnel. This chain is Large ribosomal subunit protein uL4, found in Geobacillus kaustophilus (strain HTA426).